The chain runs to 299 residues: ATP phosphoribosyltransferase (299 aa).

Belongs to the ATP phosphoribosyltransferase family. Long subfamily. Requires Mg(2+) as cofactor.

The protein resides in the cytoplasm. It carries out the reaction 1-(5-phospho-beta-D-ribosyl)-ATP + diphosphate = 5-phospho-alpha-D-ribose 1-diphosphate + ATP. Its pathway is amino-acid biosynthesis; L-histidine biosynthesis; L-histidine from 5-phospho-alpha-D-ribose 1-diphosphate: step 1/9. Its activity is regulated as follows. Feedback inhibited by histidine. In terms of biological role, catalyzes the condensation of ATP and 5-phosphoribose 1-diphosphate to form N'-(5'-phosphoribosyl)-ATP (PR-ATP). Has a crucial role in the pathway because the rate of histidine biosynthesis seems to be controlled primarily by regulation of HisG enzymatic activity. This chain is ATP phosphoribosyltransferase, found in Shewanella pealeana (strain ATCC 700345 / ANG-SQ1).